Here is a 277-residue protein sequence, read N- to C-terminus: E3 ubiquitin-protein ligase CCNB1IP1 (277 aa).

The RING-type; atypical zinc-finger motif lies at 4-51 (CEDMLLCNYRKCRIKLSGYAWVTACSHIFCDQHGSGEFSRSPAICPAC). Residues 127 to 182 (QQIQSKDVELTSMKGEVTSMKKVLEEYKKKFSDISEKLMERNRQYQKLQGLYDSLR) are a coiled coil.

As to quaternary structure, interacts with CCNB1, UBE2L3 and NF2. In terms of processing, ubiquitinated; autoubiquitinated. Phosphorylated by CDK1 on serine or threonine residues (in vitro). Highly expressed in heart. Detected at intermediate levels in liver and kidney, and at low levels in placenta, brain and lung.

Its subcellular location is the nucleus. It localises to the chromosome. The catalysed reaction is S-ubiquitinyl-[E2 ubiquitin-conjugating enzyme]-L-cysteine + [acceptor protein]-L-lysine = [E2 ubiquitin-conjugating enzyme]-L-cysteine + N(6)-ubiquitinyl-[acceptor protein]-L-lysine.. The protein operates within protein modification; protein ubiquitination. Functionally, ubiquitin E3 ligase that acts as a limiting factor for crossing-over during meiosis: required during zygonema to limit the colocalization of RNF212 with MutS-gamma-associated recombination sites and thereby establish early differentiation of crossover and non-crossover sites. Later, it is directed by MutL-gamma to stably accumulate at designated crossover sites. Probably promotes the dissociation of RNF212 and MutS-gamma to allow the progression of recombination and the implementation of the final steps of crossing over. Modulates cyclin-B levels and participates in the regulation of cell cycle progression through the G2 phase. Overexpression causes delayed entry into mitosis. The polypeptide is E3 ubiquitin-protein ligase CCNB1IP1 (CCNB1IP1) (Homo sapiens (Human)).